The chain runs to 129 residues: Small ribosomal subunit protein uS11 (129 aa).

Belongs to the universal ribosomal protein uS11 family. In terms of assembly, part of the 30S ribosomal subunit. Interacts with proteins S7 and S18. Binds to IF-3.

Its function is as follows. Located on the platform of the 30S subunit, it bridges several disparate RNA helices of the 16S rRNA. Forms part of the Shine-Dalgarno cleft in the 70S ribosome. The chain is Small ribosomal subunit protein uS11 from Halalkalibacterium halodurans (strain ATCC BAA-125 / DSM 18197 / FERM 7344 / JCM 9153 / C-125) (Bacillus halodurans).